Here is a 464-residue protein sequence, read N- to C-terminus: Sulfoacetaldehyde dehydrogenase (acylating) (464 aa).

Residue C241 is the Nucleophile of the active site.

The protein belongs to the aldehyde dehydrogenase family.

The catalysed reaction is sulfoacetaldehyde + NADP(+) + CoA = sulfoacetyl-CoA + NADPH + H(+). Involved in the degradation of sulfoacetate. Catalyzes the conversion of sulfoacetyl-CoA and NADPH to sulfoacetaldehyde, CoA and NADP(+). A much lower level of activity (1%) is observed when NADP(+) is replaced with NAD(+). In Bilophila wadsworthia (strain 3_1_6), this protein is Sulfoacetaldehyde dehydrogenase (acylating).